The chain runs to 435 residues: GTPase Der (435 aa).

EngA-type G domains are found at residues 3 to 167 (NIVA…KDEG) and 176 to 351 (PRIA…ENRG). Residues 9–16 (GRPNVGKS), 56–60 (DTGGY), 119–122 (NKSD), 182–189 (GRPNAGKS), 229–233 (DTAGI), and 294–297 (NKWD) each bind GTP. Residues 352–435 (KRIPTSELND…VPISIVYRKK (84 aa)) form the KH-like domain.

Belongs to the TRAFAC class TrmE-Era-EngA-EngB-Septin-like GTPase superfamily. EngA (Der) GTPase family. In terms of assembly, associates with the 50S ribosomal subunit.

Its function is as follows. GTPase that plays an essential role in the late steps of ribosome biogenesis. The protein is GTPase Der of Cytophaga hutchinsonii (strain ATCC 33406 / DSM 1761 / CIP 103989 / NBRC 15051 / NCIMB 9469 / D465).